Here is a 337-residue protein sequence, read N- to C-terminus: Heme A synthase (337 aa).

Helical transmembrane passes span 6–26, 87–107, 119–139, 154–174, and 192–212; these read ITKW…IGGI, FIHR…LIYF, LPYI…WYMV, LAFH…QLIK, and LIFS…GALV. Residue His256 coordinates heme. 3 consecutive transmembrane segments (helical) span residues 258-278, 285-305, and 308-328; these read LVGY…LKIE, IAYF…LTLL, and VPII…SIII. His316 contacts heme.

The protein belongs to the COX15/CtaA family. Type 2 subfamily. Interacts with CtaB. The cofactor is heme b.

Its subcellular location is the cell membrane. The enzyme catalyses Fe(II)-heme o + 2 A + H2O = Fe(II)-heme a + 2 AH2. It functions in the pathway porphyrin-containing compound metabolism; heme A biosynthesis; heme A from heme O: step 1/1. Functionally, catalyzes the conversion of heme O to heme A by two successive hydroxylations of the methyl group at C8. The first hydroxylation forms heme I, the second hydroxylation results in an unstable dihydroxymethyl group, which spontaneously dehydrates, resulting in the formyl group of heme A. This Rickettsia conorii (strain ATCC VR-613 / Malish 7) protein is Heme A synthase.